The sequence spans 406 residues: 4-hydroxy-3-methylbut-2-en-1-yl diphosphate synthase (ferredoxin) (406 aa).

[4Fe-4S] cluster-binding residues include C315, C318, C349, and E356.

It belongs to the IspG family. The cofactor is [4Fe-4S] cluster.

It catalyses the reaction (2E)-4-hydroxy-3-methylbut-2-enyl diphosphate + 2 oxidized [2Fe-2S]-[ferredoxin] + H2O = 2-C-methyl-D-erythritol 2,4-cyclic diphosphate + 2 reduced [2Fe-2S]-[ferredoxin] + H(+). The protein operates within isoprenoid biosynthesis; isopentenyl diphosphate biosynthesis via DXP pathway; isopentenyl diphosphate from 1-deoxy-D-xylulose 5-phosphate: step 5/6. Converts 2C-methyl-D-erythritol 2,4-cyclodiphosphate (ME-2,4cPP) into 1-hydroxy-2-methyl-2-(E)-butenyl 4-diphosphate. The chain is 4-hydroxy-3-methylbut-2-en-1-yl diphosphate synthase (ferredoxin) from Rippkaea orientalis (strain PCC 8801 / RF-1) (Cyanothece sp. (strain PCC 8801)).